We begin with the raw amino-acid sequence, 470 residues long: MLEPLNEGLLSRISDVLLCGWTCQHCCQRCYESSCCQSSEDEVEILGPFPAQTPPWLMASRSNDKDGDSVHTASDVPLTPRTNSPDGRRSSSDTSKSTYSLTRRISSLDSRRPSSPLIDIKPVEFGVLSAKKESIQPSVLRRTYTPDDYFRKFEPRLYSLDSNLDDVDSLTDEEIMSKYQLGMLHFSTQYDLLHNHLTVRVIEARDLPPPISHDGSRQDMAHSNPYVKICLLPDQKNSKQTGVKRKTQKPVFEERYTFEIPFLEAQRRTLLLTVVDFDKFSRHCVIGKVAVPLCEVDLVKGGHWWKALIPSSQNEVELGELLLSLNYLPSAGRLNVDIIRAKQLLQTDVSQGSDPFVKIQLVHGLKLVKTKKTSFLRGTIDPFYNESFSFKVPQEELENASLVFTVFGHNMKSSNDFIGRIVIGQYSSGPSESNHWRRMLNTHRTAVEQWHSLRSRAECDRVSPASLEVT.

The disordered stretch occupies residues 54–112 (PPWLMASRSNDKDGDSVHTASDVPLTPRTNSPDGRRSSSDTSKSTYSLTRRISSLDSRR). The span at 92-112 (SDTSKSTYSLTRRISSLDSRR) shows a compositional bias: low complexity. A phosphoserine mark is found at Ser-114 and Ser-115. 2 C2 domains span residues 180 to 306 (QLGM…HWWK) and 317 to 451 (ELGE…EQWH).

Belongs to the synaptotagmin family.

Its subcellular location is the membrane. Functionally, plays a role in dendrite formation by melanocytes. The sequence is that of Synaptotagmin-17 (Syt17) from Mus musculus (Mouse).